The primary structure comprises 262 residues: Phosphatidylglycerol--prolipoprotein diacylglyceryl transferase (262 aa).

The next 4 helical transmembrane spans lie at 9 to 29 (LGPL…ILAV), 41 to 61 (IIPD…ILGA), 80 to 100 (IFAI…GALV), and 109 to 129 (LINT…AQSL). Position 131 (Arg-131) interacts with a 1,2-diacyl-sn-glycero-3-phospho-(1'-sn-glycerol). The next 3 helical transmembrane spans lie at 167–187 (QPTF…ILIF), 197–217 (GHIT…IEGM), and 226–246 (GLRV…MIVI).

This sequence belongs to the Lgt family.

It localises to the cell membrane. The catalysed reaction is L-cysteinyl-[prolipoprotein] + a 1,2-diacyl-sn-glycero-3-phospho-(1'-sn-glycerol) = an S-1,2-diacyl-sn-glyceryl-L-cysteinyl-[prolipoprotein] + sn-glycerol 1-phosphate + H(+). It functions in the pathway protein modification; lipoprotein biosynthesis (diacylglyceryl transfer). Catalyzes the transfer of the diacylglyceryl group from phosphatidylglycerol to the sulfhydryl group of the N-terminal cysteine of a prolipoprotein, the first step in the formation of mature lipoproteins. This chain is Phosphatidylglycerol--prolipoprotein diacylglyceryl transferase, found in Streptococcus pneumoniae (strain ATCC 700669 / Spain 23F-1).